Reading from the N-terminus, the 361-residue chain is Oxidoreductase lepF (361 aa).

The chain crosses the membrane as a helical span at residues 257 to 277; the sequence is MLMLVLQAVLLPVFYVVAMPL.

Belongs to the NmrA-type oxidoreductase family.

It is found in the membrane. Its function is as follows. Oxidoreductase; part of the gene cluster 23 that mediates the biosynthesis of a family of 2-pyridones known as leporins. The hybrid PKS-NRPS synthetase lepA and the enoyl reductase lepG are responsible for fusion of phenylalanine with a hexaketide and subsequent release of the stable tetramic acid precursor, pre-leporin C. Because lepA lacks a designated enoylreductase (ER) domain, the required activity is provided the enoyl reductase lepG. It is possible that the dehydrogenase lepF also participates in production of pre-leporin C. Cytochrome P450 monooxygenase lepH is then required for the ring expansion step to yield leporin C. Leporin C is then presumably further oxidized by the N-hydroxylase lepD to form leporin B. LepI may possess a function in biosynthesis upstream of lepA. Leporin B is further oxidized in the presence of ferric ion to give the leporin B trimer-iron chelate, but whether or not this reaction is catalyzed by an enzyme in the pathway or by ferric ion is not determined yet. This Aspergillus flavus (strain ATCC 200026 / FGSC A1120 / IAM 13836 / NRRL 3357 / JCM 12722 / SRRC 167) protein is Oxidoreductase lepF.